Consider the following 149-residue polypeptide: Small ribosomal subunit protein uS15 (149 aa).

Positions 1–11 are enriched in basic and acidic residues; the sequence is MARMHSRDRGK. A disordered region spans residues 1 to 25; that stretch reads MARMHSRDRGKSGSTRPPRVAPPSW.

This sequence belongs to the universal ribosomal protein uS15 family. In terms of assembly, part of the 30S ribosomal subunit.

The sequence is that of Small ribosomal subunit protein uS15 from Methanopyrus kandleri (strain AV19 / DSM 6324 / JCM 9639 / NBRC 100938).